The sequence spans 328 residues: Glucokinase (328 aa).

Position 16-21 (16-21 (ADIGGT)) interacts with ATP.

The protein belongs to the bacterial glucokinase family.

The protein localises to the cytoplasm. It catalyses the reaction D-glucose + ATP = D-glucose 6-phosphate + ADP + H(+). The chain is Glucokinase from Neisseria gonorrhoeae (strain ATCC 700825 / FA 1090).